A 789-amino-acid chain; its full sequence is Probable phosphoketolase 1 (789 aa).

Belongs to the XFP family. It depends on thiamine diphosphate as a cofactor.

The sequence is that of Probable phosphoketolase 1 from Rhizobium meliloti (strain 1021) (Ensifer meliloti).